Here is a 435-residue protein sequence, read N- to C-terminus: uncharacterized protein (435 aa).

Helical transmembrane passes span 40–60 (LVST…EAVF), 103–123 (VLWT…WLIL), 133–153 (IMLA…IYNP), 195–215 (LIHE…IIVL), 226–246 (ICTA…AVVG), 313–333 (VAVV…LFFV), 358–378 (LALP…AVDW), 381–401 (WWVM…IDRP), and 414–434 (VFVC…NNIG).

Its subcellular location is the cell membrane. This is an uncharacterized protein from Mycobacterium bovis (strain ATCC BAA-935 / AF2122/97).